A 112-amino-acid chain; its full sequence is UPF0102 protein Cla_1413 (112 aa).

Belongs to the UPF0102 family.

This is UPF0102 protein Cla_1413 from Campylobacter lari (strain RM2100 / D67 / ATCC BAA-1060).